Here is a 786-residue protein sequence, read N- to C-terminus: Pentatricopeptide repeat-containing protein At2g22070 (786 aa).

16 PPR repeats span residues 48–78, 79–109, 110–144, 145–179, 180–214, 215–241, 242–276, 278–312, 313–347, 350–376, 377–411, 412–446, 447–477, 479–513, 514–548, and 550–580; these read SVYLMNNLMNVYSKTGYALHARKLFDEMPLR, TAFSWNTVLSAYSKRGDMDSTCEFFDQLPQR, DSVSWTTMIVGYKNIGQYHKAIRVMGDMVKEGIEP, TQFTLTNVLASVAATRCMETGKKVHSFIVKLGLRG, NVSVSNSLLNMYAKCGDPMMAKFVFDRMVVRDISS, WNAMIALHMQVGQMDLAMAQFEQMAER, DIVTWNSMISGFNQRGYDLRALDIFSKMLRDSLLS, DRFTLASVLSACANLEKLCIGKQIHSHIVTTGFDI, SGIVLNALISMYSRCGGVETARRLIEQRGTKDLKI, FTALLDGYIKLGDMNQAKNIFVSLKDR, DVVAWTAMIVGYEQHGSYGEAINLFRSMVGGGQRP, NSYTLAAMLSVASSLASLSHGKQIHGSAVKSGEIY, SVSVSNALITMYAKAGNITSASRAFDLIRCE, DTVSWTSMIIALAQHGHAEEALELFETMLMEGLRP, DHITYVGVFSACTHAGLVNQGRQYFDMMKDVDKII, and TLSHYACMVDLFGRAGLLQEAQEFIEKMPIE. The interval 585 to 660 is type E motif; that stretch reads TWGSLLSACR…EQGFSWIEVK (76 aa). A type E(+) motif region spans residues 661 to 691; sequence HKVHVFGVEDGTHPEKNEIYMTMKKIWDEIK. The tract at residues 692 to 786 is type DYW motif; sequence KMGYVPDTAS…DGFCSCRDYW (95 aa).

This sequence belongs to the PPR family. PCMP-H subfamily.

This is Pentatricopeptide repeat-containing protein At2g22070 (PCMP-H41) from Arabidopsis thaliana (Mouse-ear cress).